A 526-amino-acid polypeptide reads, in one-letter code: Peptide chain release factor 3 (526 aa).

The region spanning 8-277 (DKRRTFAIIS…GLTQWAPKPQ (270 aa)) is the tr-type G domain. GTP-binding positions include 17-24 (SHPDAGKT), 85-89 (DTPGH), and 139-142 (NKLD).

Belongs to the TRAFAC class translation factor GTPase superfamily. Classic translation factor GTPase family. PrfC subfamily.

The protein resides in the cytoplasm. In terms of biological role, increases the formation of ribosomal termination complexes and stimulates activities of RF-1 and RF-2. It binds guanine nucleotides and has strong preference for UGA stop codons. It may interact directly with the ribosome. The stimulation of RF-1 and RF-2 is significantly reduced by GTP and GDP, but not by GMP. This Actinobacillus succinogenes (strain ATCC 55618 / DSM 22257 / CCUG 43843 / 130Z) protein is Peptide chain release factor 3.